A 382-amino-acid chain; its full sequence is Nitric oxide reductase FlRd-NAD(+) reductase (382 aa).

This sequence belongs to the FAD-dependent oxidoreductase family. FAD is required as a cofactor.

The protein localises to the cytoplasm. The catalysed reaction is 2 reduced [nitric oxide reductase rubredoxin domain] + NAD(+) + H(+) = 2 oxidized [nitric oxide reductase rubredoxin domain] + NADH. The protein operates within nitrogen metabolism; nitric oxide reduction. Functionally, one of at least two accessory proteins for anaerobic nitric oxide (NO) reductase. Reduces the rubredoxin moiety of NO reductase. This is Nitric oxide reductase FlRd-NAD(+) reductase from Vibrio vulnificus (strain CMCP6).